The chain runs to 486 residues: UDP-N-acetylmuramate--L-alanine ligase (486 aa).

126 to 132 (GTHGKTS) is an ATP binding site.

It belongs to the MurCDEF family.

It localises to the cytoplasm. It carries out the reaction UDP-N-acetyl-alpha-D-muramate + L-alanine + ATP = UDP-N-acetyl-alpha-D-muramoyl-L-alanine + ADP + phosphate + H(+). The protein operates within cell wall biogenesis; peptidoglycan biosynthesis. Cell wall formation. The polypeptide is UDP-N-acetylmuramate--L-alanine ligase (Corynebacterium glutamicum (strain R)).